The following is a 792-amino-acid chain: Terminal nucleotidyltransferase 4A (792 aa).

Residues 55-191 (GAAGRGSGGL…QFHPGRRKRE (137 aa)) form a disordered region. Composition is skewed to low complexity over residues 80-97 (APAALPPALLTALGPAAE) and 105-139 (SPSLSSSSSSSSSNAESGTESPGCSSSSSSSASLG). The Mg(2+) site is built by aspartate 297 and aspartate 299. ATP is bound by residues glycine 360, lysine 385, serine 403, and tyrosine 404. In terms of domain architecture, PAP-associated spans 428 to 486 (NLGMLLVEFFELYGRNFNYLKTGIRIKEGGAYIAKEEIMKAMTSGYRPSMLCIEDPLLP). The ATP site is built by asparagine 488 and arginine 492. A compositionally biased stretch (low complexity) spans 601–619 (QLLSSGSSASSVSSLSGSD). Disordered regions lie at residues 601-632 (QLLSSGSSASSVSSLSGSDVDSDTPPCTTPSV) and 737-792 (MKGS…SLSR). Positions 744 to 756 (TQGGGYSSVGSGG) are enriched in gly residues. The span at 764-781 (RGHHQYNRTGWRRKKHTH) shows a compositional bias: basic residues.

It belongs to the DNA polymerase type-B-like family. Component of a nuclear TRAMP-like complex, an ATP-dependent exosome regulatory complex consisting of a helicase (MTREX), an oligadenylate polymerase (TENT4B or TENT4A), and a substrate specific RNA-binding factor (ZCCHC7 or ZCCHC8). Several TRAMP-like complexes exist with specific compositions and are associated with nuclear, or nucleolar RNA exosomes. The cofactor is Mg(2+). Mn(2+) is required as a cofactor.

Its subcellular location is the cytoplasm. It is found in the nucleus. The protein resides in the nucleoplasm. The catalysed reaction is RNA(n) + ATP = RNA(n)-3'-adenine ribonucleotide + diphosphate. Its function is as follows. Terminal nucleotidyltransferase that catalyzes preferentially the transfer of ATP and GTP on RNA 3' poly(A) tail creating a heterogeneous 3' poly(A) tail leading to mRNAs stabilization by protecting mRNAs from active deadenylation. Also functions as a catalytic subunit of a TRAMP-like complex which has a poly(A) RNA polymerase activity and is involved in a post-transcriptional quality control mechanism. Polyadenylation with short oligo(A) tails is required for the degradative activity of the exosome on several of its nuclear RNA substrates. Has no terminal uridylyltransferase activity, and does not play a role in replication-dependent histone mRNA degradation via uridylation. This Homo sapiens (Human) protein is Terminal nucleotidyltransferase 4A.